A 376-amino-acid chain; its full sequence is MSNKSVLLIAGEPSGDLLGAHLAQSLKSLEPNLKLAGMGGKRMREAGVEVFINADKLAVVGLLEILRQFRDIRHAMQTLKRYFKKTPPDLVVFIDYPGFNLHMAKQAKKAGIKVLYYVSPQIWAWRYGRIKKIKKYVDHMAVLFDFEEKLYQKENVPVSFVGHPLANAPTPSLSRNEICKQFNLDPDKPIVALFPGSREQEINKLLPMMVQAGKLIQTQIPTVQFILPLALNLALDKIRPFLSPEIKVIQNDISHVLAIAHAAVAASGTVTLEIALQQVPLVIIYKVAPLTFWLGKKLIRLSFIGLCNLVSPEPVAVELLQQDATPQAIADEVFQLLNNHNYRQSIIGKLGHLRPQLDRGNAAQNVAKVIHNLIFS.

Belongs to the LpxB family.

It catalyses the reaction a lipid X + a UDP-2-N,3-O-bis[(3R)-3-hydroxyacyl]-alpha-D-glucosamine = a lipid A disaccharide + UDP + H(+). It participates in bacterial outer membrane biogenesis; LPS lipid A biosynthesis. Functionally, condensation of UDP-2,3-diacylglucosamine and 2,3-diacylglucosamine-1-phosphate to form lipid A disaccharide, a precursor of lipid A, a phosphorylated glycolipid that anchors the lipopolysaccharide to the outer membrane of the cell. The chain is Lipid-A-disaccharide synthase from Coxiella burnetii (strain CbuG_Q212) (Coxiella burnetii (strain Q212)).